The primary structure comprises 117 residues: Large ribosomal subunit protein bL19 (117 aa).

Belongs to the bacterial ribosomal protein bL19 family.

In terms of biological role, this protein is located at the 30S-50S ribosomal subunit interface and may play a role in the structure and function of the aminoacyl-tRNA binding site. The sequence is that of Large ribosomal subunit protein bL19 from Micrococcus luteus (strain ATCC 4698 / DSM 20030 / JCM 1464 / CCM 169 / CCUG 5858 / IAM 1056 / NBRC 3333 / NCIMB 9278 / NCTC 2665 / VKM Ac-2230) (Micrococcus lysodeikticus).